We begin with the raw amino-acid sequence, 240 residues long: Probable transcriptional regulatory protein MADE_1004275 (240 aa).

It belongs to the TACO1 family.

It is found in the cytoplasm. In Alteromonas mediterranea (strain DSM 17117 / CIP 110805 / LMG 28347 / Deep ecotype), this protein is Probable transcriptional regulatory protein MADE_1004275.